The following is a 275-amino-acid chain: Trypsin-3 (275 aa).

A signal peptide spans 1-22; it reads MISNKIAILLAVLVVAVACAQA. Residues 23–48 constitute a propeptide, activation peptide; it reads RVALKHRSVQALPRFLPRPKYDVGHR. A Peptidase S1 domain is found at 49–274; the sequence is IVGGFEIDVS…VRDWVRENSG (226 aa). Residues C74 and C90 are joined by a disulfide bond. Catalysis depends on charge relay system residues H89 and D134. 2 cysteine pairs are disulfide-bonded: C199–C215 and C226–C250. S230 functions as the Charge relay system in the catalytic mechanism.

Belongs to the peptidase S1 family. Expressed in the midgut. Expression levels drop a few hours after blood feeding and pick up again 28 hours later.

The protein localises to the secreted. It carries out the reaction Preferential cleavage: Arg-|-Xaa, Lys-|-Xaa.. In terms of biological role, constitutive trypsin that is expressed 2 days after emergence, coinciding with host seeking behavior of the female. This is Trypsin-3 (TRYP3) from Anopheles gambiae (African malaria mosquito).